The primary structure comprises 421 residues: Ig-like V-type domain-containing protein FAM187A (421 aa).

Positions 1–18 are cleaved as a signal peptide; the sequence is MNLAHTTVLLWAWGSLQA. Over 19 to 377 the chain is Extracellular; sequence FEIVEKENIF…VSFSDPETRA (359 aa). The Ig-like V-type domain occupies 268-362; it reads PWLPQVPIQF…IAGFRLGVTS (95 aa). Cys290 and Cys346 are disulfide-bonded. Residue Asn318 is glycosylated (N-linked (GlcNAc...) asparagine). A helical membrane pass occupies residues 378–398; the sequence is ALGLILIGYMLITVIFISIHL. Over 399-421 the chain is Cytoplasmic; it reads CRCCCYLFRFCPNFSPRLSRPQL.

It belongs to the FAM187 family.

The protein resides in the membrane. The chain is Ig-like V-type domain-containing protein FAM187A (FAM187A) from Bos taurus (Bovine).